Here is a 38-residue protein sequence, read N- to C-terminus: Cytochrome b6-f complex subunit 5 (38 aa).

The helical transmembrane segment at Leu-5–Ala-25 threads the bilayer.

Belongs to the PetG family. As to quaternary structure, the 4 large subunits of the cytochrome b6-f complex are cytochrome b6, subunit IV (17 kDa polypeptide, PetD), cytochrome f and the Rieske protein, while the 4 small subunits are PetG, PetL, PetM and PetN. The complex functions as a dimer.

The protein resides in the cellular thylakoid membrane. Component of the cytochrome b6-f complex, which mediates electron transfer between photosystem II (PSII) and photosystem I (PSI), cyclic electron flow around PSI, and state transitions. PetG is required for either the stability or assembly of the cytochrome b6-f complex. This Gloeothece citriformis (strain PCC 7424) (Cyanothece sp. (strain PCC 7424)) protein is Cytochrome b6-f complex subunit 5.